An 897-amino-acid chain; its full sequence is N-terminal acetyltransferase A complex auxiliary subunit NAA15 (897 aa).

TPR repeat units lie at residues 77–110 (HVCWHVLGLLYRSDREYREAIKCYRNALRIDPDN), 111–144 (LEILRDLSLLQAQMRDLSGFVETRQQLLTLKPNH), 189–222 (TEMILYKVSLLEESGSFDKALEELHKKEPKIVDK), 223–256 (LSYKEQEVSLLSKVGRLEEANKLYRVLLSMNPDN), 298–331 (SSAVKRIPLDFLQDENFKEAVAKYIKPLLTKGVP), 380–413 (LWTLFFLAQHYDRRGQYDVALCKIDEAIAHTPTV), and 488–523 (QCMWYDLASGDSYFRQGDLGRALKKFLAVEKHYADI). Disordered regions lie at residues 578–640 (KSTA…DPHG) and 863–897 (SRKSNENGDTPNHPMGQTELSDGQLEAFKSLSVAT). The span at 602 to 617 (KAEARAKKEAESKSEE) shows a compositional bias: basic and acidic residues. Positions 863–872 (SRKSNENGDT) are enriched in polar residues.

Part of the NatA complex. Associates with ribosomes. Interacts with NAA10. In terms of tissue distribution, expressed in leaves, roots, shoots and flowers.

Its function is as follows. Auxiliary subunit of the NatA N-alpha-acetyltransferase complex. Required for male gametocyte development, embryogenesis, suspensor development and the formation of the quiescent center (QC) in the root meristem. Involved in plant immunity through the regulation of SNC1 stability. Required for embryo development. This chain is N-terminal acetyltransferase A complex auxiliary subunit NAA15, found in Arabidopsis thaliana (Mouse-ear cress).